Here is a 492-residue protein sequence, read N- to C-terminus: N-succinylglutamate 5-semialdehyde dehydrogenase (492 aa).

220–225 (GSANTG) contacts NAD(+). Active-site residues include glutamate 243 and cysteine 277.

It belongs to the aldehyde dehydrogenase family. AstD subfamily.

The catalysed reaction is N-succinyl-L-glutamate 5-semialdehyde + NAD(+) + H2O = N-succinyl-L-glutamate + NADH + 2 H(+). Its pathway is amino-acid degradation; L-arginine degradation via AST pathway; L-glutamate and succinate from L-arginine: step 4/5. Its function is as follows. Catalyzes the NAD-dependent reduction of succinylglutamate semialdehyde into succinylglutamate. This chain is N-succinylglutamate 5-semialdehyde dehydrogenase, found in Escherichia coli O157:H7.